The following is a 279-amino-acid chain: Large ribosomal subunit protein uL2 (279 aa).

The tract at residues 218 to 279 is disordered; it reads RPQTRGSAMN…ITRRKSNPKR (62 aa). Residues 255 to 279 are compositionally biased toward basic residues; sequence KGSKTRRKKASDKLIITRRKSNPKR.

Belongs to the universal ribosomal protein uL2 family. Part of the 50S ribosomal subunit. Forms a bridge to the 30S subunit in the 70S ribosome.

In terms of biological role, one of the primary rRNA binding proteins. Required for association of the 30S and 50S subunits to form the 70S ribosome, for tRNA binding and peptide bond formation. It has been suggested to have peptidyltransferase activity; this is somewhat controversial. Makes several contacts with the 16S rRNA in the 70S ribosome. The protein is Large ribosomal subunit protein uL2 of Sulfurimonas denitrificans (strain ATCC 33889 / DSM 1251) (Thiomicrospira denitrificans (strain ATCC 33889 / DSM 1251)).